The following is a 228-amino-acid chain: MALLILLRHGQSVWNEKNLFSGWVDIPLSQQGIEEAFSAGRAIQNLPIDCIFTSTLVRSLMTALLAMTNHHSKKIPYIVHEDPKAKEMSRIYSAEEENNMIPLYQSSALNERMYGELQGKNKKQTAEQFGEERVKLWRRSYKTAPPQGESLYDTKQRTLPYFEKNILPQLQNGKNVFVSAHGNSLRSLIMDLEKLSEEEVLSLELPTGKPVVYQWKNHKIEKHPEFFG.

Substrate is bound by residues 8–15 (RHGQSVWN), 21–22 (SG), Arg58, 111–114 (ERMY), Lys122, 138–139 (RR), and 182–183 (GN). Catalysis depends on His9, which acts as the Tele-phosphohistidine intermediate. Residue Glu111 is the Proton donor/acceptor of the active site.

This sequence belongs to the phosphoglycerate mutase family. BPG-dependent PGAM subfamily.

It carries out the reaction (2R)-2-phosphoglycerate = (2R)-3-phosphoglycerate. It functions in the pathway carbohydrate degradation; glycolysis; pyruvate from D-glyceraldehyde 3-phosphate: step 3/5. Catalyzes the interconversion of 2-phosphoglycerate and 3-phosphoglycerate. The polypeptide is 2,3-bisphosphoglycerate-dependent phosphoglycerate mutase (Chlamydia pneumoniae (Chlamydophila pneumoniae)).